The primary structure comprises 362 residues: Homeobox-leucine zipper protein HOX11 (362 aa).

Residues R27 to E45 show a composition bias toward basic and acidic residues. The segment at R27–L179 is disordered. Over residues L64 to L75 the composition is skewed to low complexity. A compositionally biased stretch (polar residues) spans L126 to G135. A compositionally biased stretch (gly residues) spans H145–D160. Positions S174–Q233 form a DNA-binding region, homeobox. The tract at residues K232–P276 is leucine-zipper. A disordered region spans residues A301–A330.

Belongs to the HD-ZIP homeobox family. Class II subfamily. Expressed in stems, leaf sheaths and blades and panicles.

It localises to the nucleus. Functionally, probable transcription factor. The polypeptide is Homeobox-leucine zipper protein HOX11 (HOX11) (Oryza sativa subsp. japonica (Rice)).